The chain runs to 209 residues: Uracil phosphoribosyltransferase (209 aa).

Residues Arg-79, Arg-104, and 131–139 contribute to the 5-phospho-alpha-D-ribose 1-diphosphate site; that span reads TPVVATANT. Residues Ile-194 and 199-201 each bind uracil; that span reads GDA. A 5-phospho-alpha-D-ribose 1-diphosphate-binding site is contributed by Asp-200.

The protein belongs to the UPRTase family. Mg(2+) serves as cofactor.

It catalyses the reaction UMP + diphosphate = 5-phospho-alpha-D-ribose 1-diphosphate + uracil. It participates in pyrimidine metabolism; UMP biosynthesis via salvage pathway; UMP from uracil: step 1/1. Allosterically activated by GTP. In terms of biological role, catalyzes the conversion of uracil and 5-phospho-alpha-D-ribose 1-diphosphate (PRPP) to UMP and diphosphate. This chain is Uracil phosphoribosyltransferase, found in Bradyrhizobium diazoefficiens (strain JCM 10833 / BCRC 13528 / IAM 13628 / NBRC 14792 / USDA 110).